The primary structure comprises 372 residues: Aminomethyltransferase (372 aa).

It belongs to the GcvT family. As to quaternary structure, the glycine cleavage system is composed of four proteins: P, T, L and H.

It catalyses the reaction N(6)-[(R)-S(8)-aminomethyldihydrolipoyl]-L-lysyl-[protein] + (6S)-5,6,7,8-tetrahydrofolate = N(6)-[(R)-dihydrolipoyl]-L-lysyl-[protein] + (6R)-5,10-methylene-5,6,7,8-tetrahydrofolate + NH4(+). Its function is as follows. The glycine cleavage system catalyzes the degradation of glycine. This is Aminomethyltransferase from Rubrobacter xylanophilus (strain DSM 9941 / JCM 11954 / NBRC 16129 / PRD-1).